The chain runs to 499 residues: Probable malate:quinone oxidoreductase 4 (499 aa).

The protein belongs to the MQO family. FAD serves as cofactor.

The catalysed reaction is (S)-malate + a quinone = a quinol + oxaloacetate. Its pathway is carbohydrate metabolism; tricarboxylic acid cycle; oxaloacetate from (S)-malate (quinone route): step 1/1. The polypeptide is Probable malate:quinone oxidoreductase 4 (Staphylococcus epidermidis (strain ATCC 12228 / FDA PCI 1200)).